A 292-amino-acid chain; its full sequence is Claudin-23 (292 aa).

At 1–3 (MRT) the chain is on the cytoplasmic side. The helical transmembrane segment at 4–24 (PVVMTLGMVLAPCGLLLNLTG) threads the bilayer. Residues 25-81 (TLAPGWRLVKGFLNQPVDVELYQGLWDMCREQSSRERECGQTDQWGYFEAQPVLVAR) lie on the Extracellular side of the membrane. The chain crosses the membrane as a helical span at residues 82–102 (ALMVTSLAATVLGLLLASLGV). Over 103-110 (RCWQDEPN) the chain is Cytoplasmic. A helical membrane pass occupies residues 111 to 131 (FVLAGLSGVVLFVAGLLGLIP). Topologically, residues 132–160 (VSWYNHFLGDRDVLPAPASPVTVQVSYSL) are extracellular. The helical transmembrane segment at 161–181 (VLGYLGSCLLLLGGFSLALSF) threads the bilayer. Residues 182–292 (APWCDERCRR…DSSLPCDSDL (111 aa)) are Cytoplasmic-facing. A disordered region spans residues 222–292 (KYYSDGQHRP…DSSLPCDSDL (71 aa)). The segment covering 273-282 (DAPSCSTHPC) has biased composition (polar residues).

This sequence belongs to the claudin family. As to expression, expressed in germinal center B-cells, placenta, stomach as well as in colon tumor.

Its subcellular location is the cell junction. It localises to the tight junction. The protein localises to the cell membrane. In terms of biological role, plays a major role in tight junction-specific obliteration of the intercellular space, through calcium-independent cell-adhesion activity. The chain is Claudin-23 (CLDN23) from Homo sapiens (Human).